Reading from the N-terminus, the 632-residue chain is SH2B adapter protein 2 (632 aa).

Tyr52 carries the post-translational modification Phosphotyrosine. Ser141 is modified (phosphoserine). A PH domain is found at 193 to 306; that stretch reads DIQREGALRF…WVADIQGCVD (114 aa). Phosphoserine is present on Ser310. Residues 381–409 form a disordered region; that stretch reads TLESPGGSGSDSNNTGEQGAETDPEAEPE. Over residues 400 to 409 the composition is skewed to acidic residues; it reads AETDPEAEPE. An SH2 domain is found at 417 to 515; the sequence is WFHGTLSRVK…SADITLRSYV (99 aa). Disordered stretches follow at residues 516–537 and 558–632; these read RAQD…SPAC and ASPS…YSFY. Pro residues predominate over residues 519–532; sequence DPPPEPGPTPPAAP. Composition is skewed to low complexity over residues 558 to 579 and 604 to 626; these read ASPS…AASG and EAVA…RAVE. Tyr629 carries the post-translational modification Phosphotyrosine.

The protein belongs to the SH2B adapter family. Homodimer. Interacts with KIT/c-KIT, SHC1, EPOR, PDGFR, VAV1 and VAV3. Interacts (via N-terminal region) with SHC1. Interacts (via the phosphorylated C-terminus) with GRB2. Interacts (via its SH2 domain) with EPOR, INSR and KIT. Interacts with GRB2 after B-cell antigen receptor stimulation. Interacts (via PH domain) with VAV3. Interacts with NTRK1, NTRK2 and NTRK3 (phosphorylated); after stimulation of the receptor by its extracellular ligand and subsequent autophosphorylation of the receptor. Binds INSR, GRB2, ASB6 and CAP. Insulin stimulation leads to dissociation of CAP. Binds CBS only when SH2B2/APS has become phosphorylated. INSR binding does not depend on the phosphorylation of SH2B2/APS. In terms of processing, tyrosine phosphorylated by JAK2, KIT and other kinases activated by B-cell receptor in response to stimulation with cytokines, IL3, IL5, PDGF, IGF1, IGF2, CSF2/GM-CSF and cross-linking of the B-cell receptor complex. In terms of tissue distribution, expressed in spleen, prostate, testis, uterus, small intestine and skeletal muscle. Among hematopoietic cell lines, expressed exclusively in B-cells. Not expressed in most tumor cell lines.

The protein resides in the cytoplasm. It localises to the cell membrane. Adapter protein for several members of the tyrosine kinase receptor family. Involved in multiple signaling pathways. May be involved in coupling from immunoreceptor to Ras signaling. Acts as a negative regulator of cytokine signaling in collaboration with CBL. Binds to EPOR and suppresses EPO-induced STAT5 activation, possibly through a masking effect on STAT5 docking sites in EPOR. Suppresses PDGF-induced mitogenesis. May induce cytoskeletal reorganization via interaction with VAV3. This chain is SH2B adapter protein 2 (SH2B2), found in Homo sapiens (Human).